A 353-amino-acid chain; its full sequence is Farnesyl pyrophosphate synthase (353 aa).

3 residues coordinate isopentenyl diphosphate: Lys-57, Arg-60, and Gln-96. N6-(2-hydroxyisobutyryl)lysine; alternate is present on Lys-57. At Lys-57 the chain carries N6-acetyllysine; alternate. Mg(2+) is bound by residues Asp-103 and Asp-107. Residue Arg-112 participates in dimethylallyl diphosphate binding. Arg-113 is a binding site for isopentenyl diphosphate. Dimethylallyl diphosphate contacts are provided by Lys-200, Thr-201, Gln-240, Lys-257, and Lys-266.

This sequence belongs to the FPP/GGPP synthase family. In terms of assembly, homodimer. Interacts with RSAD2. Requires Mg(2+) as cofactor.

The protein resides in the cytoplasm. The enzyme catalyses isopentenyl diphosphate + dimethylallyl diphosphate = (2E)-geranyl diphosphate + diphosphate. It catalyses the reaction isopentenyl diphosphate + (2E)-geranyl diphosphate = (2E,6E)-farnesyl diphosphate + diphosphate. It functions in the pathway isoprenoid biosynthesis; farnesyl diphosphate biosynthesis; farnesyl diphosphate from geranyl diphosphate and isopentenyl diphosphate: step 1/1. Its pathway is isoprenoid biosynthesis; geranyl diphosphate biosynthesis; geranyl diphosphate from dimethylallyl diphosphate and isopentenyl diphosphate: step 1/1. Its activity is regulated as follows. Inactivated by interferon-induced RSAD2. This inactivation may result of disruption of lipid rafts at the plasma membrane, and thus have an antiviral effect since many enveloped viruses need lipid rafts to bud efficiently out of the cell. Key enzyme in isoprenoid biosynthesis which catalyzes the formation of farnesyl diphosphate (FPP), a precursor for several classes of essential metabolites including sterols, dolichols, carotenoids, and ubiquinones. FPP also serves as substrate for protein farnesylation and geranylgeranylation. Catalyzes the sequential condensation of isopentenyl pyrophosphate with the allylic pyrophosphates, dimethylallyl pyrophosphate, and then with the resultant geranylpyrophosphate to the ultimate product farnesyl pyrophosphate. The polypeptide is Farnesyl pyrophosphate synthase (Fdps) (Mus musculus (Mouse)).